The following is a 296-amino-acid chain: Large ribosomal subunit protein uL15m (296 aa).

The transit peptide at Met-1 to Arg-21 directs the protein to the mitochondrion. A disordered region spans residues Val-22–Gly-66. Over residues Pro-36–Gly-52 the composition is skewed to basic residues.

It belongs to the universal ribosomal protein uL15 family. In terms of assembly, component of the mitochondrial large ribosomal subunit (mt-LSU). Mature mammalian 55S mitochondrial ribosomes consist of a small (28S) and a large (39S) subunit. The 28S small subunit contains a 12S ribosomal RNA (12S mt-rRNA) and 30 different proteins. The 39S large subunit contains a 16S rRNA (16S mt-rRNA), a copy of mitochondrial valine transfer RNA (mt-tRNA(Val)), which plays an integral structural role, and 52 different proteins.

The protein resides in the mitochondrion. The polypeptide is Large ribosomal subunit protein uL15m (MRPL15) (Homo sapiens (Human)).